A 161-amino-acid chain; its full sequence is V-type proton ATPase 16 kDa proteolipid subunit c 2 (161 aa).

Residues 1-15 (MSYDLETAERAAYAP) lie on the Lumenal side of the membrane. The helical transmembrane segment at 16-36 (FFGYMGAASAQIFTVLGAAYG) threads the bilayer. Topologically, residues 37–58 (TAKSAVGICSMGVMRPELIMKS) are cytoplasmic. A helical transmembrane segment spans residues 59-79 (VIPVIMAGIIGIYGLVVAMVL). Topologically, residues 80–98 (KGKVTSASAGYDLNKGFAH) are lumenal. A helical membrane pass occupies residues 99–119 (LAAGLTCGLCGLGAGYAIGIV). Topologically, residues 120-137 (GDAGVRGTAQQPRLFVGM) are cytoplasmic. The chain crosses the membrane as a helical span at residues 138 to 158 (ILILIFSEVLGLYGMIVALIL). Over 159-161 (GTS) the chain is Lumenal.

This sequence belongs to the V-ATPase proteolipid subunit family. As to quaternary structure, V-ATPase is a heteromultimeric enzyme made up of two complexes: the ATP-hydrolytic V1 complex and the proton translocation V0 complex. The V1 complex consists of three catalytic AB heterodimers that form a heterohexamer, three peripheral stalks each consisting of EG heterodimers, one central rotor including subunits D and F, and the regulatory subunits C and H. The proton translocation complex V0 consists of the proton transport subunit a, a ring of proteolipid subunits c9c'', rotary subunit d, subunits e and f, and the accessory subunits vah-19/Ac45 and vah-20/PRR. As to expression, expressed in the H-shaped excretory cell, rectum, and a pair of cells posterior to the anus.

The protein resides in the membrane. Its function is as follows. Proton-conducting pore forming subunit of the V0 complex of vacuolar(H+)-ATPase (V-ATPase), a multisubunit enzyme composed of a peripheral complex (V1) that hydrolyzes ATP and a membrane integral complex (V0) that translocates protons. V-ATPase is responsible for acidifying and maintaining the pH of intracellular compartments and in some cell types, is targeted to the plasma membrane, where it is responsible for acidifying the extracellular environment. Involved in necrotic cell death. Required along with other vacuolar ATPase components for the removal of protein aggregates which form in immature oocytes in the distal gonad. This removal occurs as the oocytes mature and move to the proximal gonad, is triggered by the introduction of sperm through mating and occurs before fertilization. The introduction of sperm triggers V-ATPase accumulation in proximal oocytes and induces lysosomal acidification which leads to engulfing of protein aggregates by lysosomes and subsequent clearance of the aggregates. Lysosomal acidification also leads to changes in mitochondrial morphology and function. Mitochondria in distal immature oocytes are fragmented, produce high levels of reactive oxygen species (ROS) and have high membrane potential, indicative of metabolic inactivity. In contrast, mitochondria in proximal mature oocytes are tubular with lower ROS levels and membrane potential, indicative of an active metabolic state required for aggregate mobilization before clearance. This is V-type proton ATPase 16 kDa proteolipid subunit c 2 from Caenorhabditis elegans.